A 535-amino-acid chain; its full sequence is Probable anion transporter 2, chloroplastic (535 aa).

The N-terminal 95 residues, 1 to 95 (MASIRSCVSV…RERAVAAMCS (95 aa)), are a transit peptide targeting the chloroplast. The next 12 helical transmembrane spans lie at 125–145 (VVALVAAVMLLCNADRVVMSV), 160–180 (FLGIVQSSFLWGYVFSSMVGG), 191–211 (VMAGAAALWSLATFLTPWAAS), 215–235 (IMLLAIRALFGLAEGVAFPTM), 254–274 (ISMGGFHLGNVISFLATPIIM), 279–299 (LAGTFAFFASLGYLWLSVWLF), 343–363 (IEMWAIIVANVVNNWGYFVLL), 381–401 (AAWFSAIPWAVMALSGYVAGA), 413–433 (VALVRKIMQSIGFIGPGVSLL), 443–463 (VAAVLMTIALSLSSFSQAGYF), 483–503 (GIGTVAAIVSTIGTGYFVQWL), and 504–524 (GSFQAFLTLTAVLYFSATVFY).

Belongs to the major facilitator superfamily. Sodium/anion cotransporter (TC 2.A.1.14) family.

It localises to the plastid. Its subcellular location is the chloroplast membrane. Probable anion transporter. The chain is Probable anion transporter 2, chloroplastic (PHT4;2) from Oryza sativa subsp. japonica (Rice).